We begin with the raw amino-acid sequence, 139 residues long: Large ribosomal subunit protein uL16 (139 aa).

Residues 1-11 (MLQPKRTKYRK) are compositionally biased toward basic residues. Residues 1–30 (MLQPKRTKYRKPFLQSHDKRKAHKGNKVSF) are disordered.

It belongs to the universal ribosomal protein uL16 family. As to quaternary structure, part of the 50S ribosomal subunit.

In terms of biological role, binds 23S rRNA and is also seen to make contacts with the A and possibly P site tRNAs. In Mycoplasmopsis synoviae (strain 53) (Mycoplasma synoviae), this protein is Large ribosomal subunit protein uL16.